An 88-amino-acid chain; its full sequence is Secretion system apparatus protein SsaS (88 aa).

2 helical membrane-spanning segments follow: residues 15–35 and 55–75; these read WIVL…GVIV and LLAI…ILLN.

This sequence belongs to the FliQ/MopD/SpaQ family.

The protein resides in the cell membrane. In terms of biological role, part of a type III secretion system. The chain is Secretion system apparatus protein SsaS (ssaS) from Salmonella typhimurium (strain LT2 / SGSC1412 / ATCC 700720).